The sequence spans 82 residues: Delta-ctenitoxin-Pn1a (82 aa).

The N-terminal stretch at 1-16 is a signal peptide; that stretch reads MKVAIVFLSLLVLAFA. Residues 17-34 constitute a propeptide that is removed on maturation; the sequence is SESIEENREEFPVEESAR. 5 disulfide bridges follow: Cys35/Cys49, Cys42/Cys55, Cys46/Cys82, Cys48/Cys65, and Cys57/Cys63.

The protein belongs to the neurotoxin 03 (Tx2) family. 05 subfamily. As to expression, expressed by the venom gland.

Its subcellular location is the secreted. This neurotoxin binds at site 3 of insect voltage-activated sodium channels (Nav) and prolongs evoked axonal action potentials by a slowing down of sodium current inactivation. The toxin also inhibits glutamate uptake from rat brain synaptosomes. It reversibly inhibits the N-methyl-D-aspartate (NMDA)-subtype of ionotropic glutamate receptor (GRIN). In addition, the toxin shows antinociceptive effect in all rat pain models tested (inflammatory, neuropathic and nociceptive). The antinociceptive effect is partially blocked when selective antagonists of both mu- and delta-opioid receptors are administered, revealing that the antinociceptive effect of the toxin involves both opioid and cannabinoid endogenous systems. In vivo, it is highly toxic to house fly (Musca domestica), toxic to cockroach, but has no effect when intracerebroventricularly injected into mice. This Phoneutria nigriventer (Brazilian armed spider) protein is Delta-ctenitoxin-Pn1a.